The chain runs to 119 residues: Dihydroneopterin aldolase (119 aa).

Substrate-binding positions include Glu21, Tyr53, and 72–73; that span reads IE. The Proton donor/acceptor role is filled by Lys99.

Belongs to the DHNA family.

It carries out the reaction 7,8-dihydroneopterin = 6-hydroxymethyl-7,8-dihydropterin + glycolaldehyde. Its pathway is cofactor biosynthesis; tetrahydrofolate biosynthesis; 2-amino-4-hydroxy-6-hydroxymethyl-7,8-dihydropteridine diphosphate from 7,8-dihydroneopterin triphosphate: step 3/4. Functionally, catalyzes the conversion of 7,8-dihydroneopterin to 6-hydroxymethyl-7,8-dihydropterin. The polypeptide is Dihydroneopterin aldolase (folB) (Streptococcus pyogenes serotype M6 (strain ATCC BAA-946 / MGAS10394)).